The chain runs to 318 residues: HPr kinase/phosphorylase (318 aa).

Active-site residues include His141 and Lys162. 156–163 is a binding site for ATP; it reads GDSAMGKS. A Mg(2+)-binding site is contributed by Ser163. Asp180 acts as the Proton acceptor; for phosphorylation activity. Proton donor; for dephosphorylation activity in catalysis. The important for the catalytic mechanism of both phosphorylation and dephosphorylation stretch occupies residues 204 to 213; the sequence is LEVRGLGILN. Glu205 is a Mg(2+) binding site. Arg248 is an active-site residue. Positions 269 to 274 are important for the catalytic mechanism of dephosphorylation; sequence PVAAGR.

This sequence belongs to the HPrK/P family. As to quaternary structure, homohexamer. The cofactor is Mg(2+).

It catalyses the reaction [HPr protein]-L-serine + ATP = [HPr protein]-O-phospho-L-serine + ADP + H(+). The enzyme catalyses [HPr protein]-O-phospho-L-serine + phosphate + H(+) = [HPr protein]-L-serine + diphosphate. Functionally, catalyzes the ATP- as well as the pyrophosphate-dependent phosphorylation of a specific serine residue in HPr, a phosphocarrier protein of the phosphoenolpyruvate-dependent sugar phosphotransferase system (PTS). HprK/P also catalyzes the pyrophosphate-producing, inorganic phosphate-dependent dephosphorylation (phosphorolysis) of seryl-phosphorylated HPr (P-Ser-HPr). In Chromobacterium violaceum (strain ATCC 12472 / DSM 30191 / JCM 1249 / CCUG 213 / NBRC 12614 / NCIMB 9131 / NCTC 9757 / MK), this protein is HPr kinase/phosphorylase.